The chain runs to 935 residues: Dual 3',5'-cyclic-AMP and -GMP phosphodiesterase 11A (935 aa).

A disordered region spans residues 41–125; that stretch reads RHSSGQGASD…ASQKELRKSF (85 aa). The segment covering 54-69 has biased composition (low complexity); sequence ALAGASSLAQSSARGS. Phosphoserine is present on residues S162, S163, and S239. 2 GAF domains span residues 217–370 and 402–558; these read DLTS…GIAI and DLEK…GLGI. Position 424 (S424) interacts with 3',5'-cyclic GMP. The 325-residue stretch at 588-912 folds into the PDEase domain; it reads SKAEVDKFKA…RKWEELHQKR (325 aa). H664 acts as the Proton donor in catalysis. A divalent metal cation contacts are provided by H668, H704, D705, and D816. The tract at residues 915–935 is disordered; that stretch reads VSAASPVPSSPSPAVAGEDRL.

It belongs to the cyclic nucleotide phosphodiesterase family. A divalent metal cation serves as cofactor. Isoform 1 is expressed in brain, heart, kidney and liver, but not in prostate. Isoform 2 is specifically expressed in testis. Isoform 3 is expressed in various tissues including brain, lung, skeletal muscle, spleen, testis and prostate.

It is found in the cytoplasm. It localises to the cytosol. It carries out the reaction 3',5'-cyclic GMP + H2O = GMP + H(+). It catalyses the reaction 3',5'-cyclic AMP + H2O = AMP + H(+). Its activity is regulated as follows. Inhibited by 3-isobutyl-1-methylxanthine (IBMX), zaprinast and dipyridamole. cGMP acts as an allosteric activator. Plays a role in signal transduction by regulating the intracellular concentration of cyclic nucleotides cAMP and cGMP. Catalyzes the hydrolysis of both cAMP and cGMP to 5'-AMP and 5'-GMP, respectively. This is Dual 3',5'-cyclic-AMP and -GMP phosphodiesterase 11A from Rattus norvegicus (Rat).